The following is a 398-amino-acid chain: Ubiquitin-like modifier-activating enzyme 5 (398 aa).

5 residues coordinate ATP: Gly-76, Asp-97, Lys-120, Asn-143, and Asn-177. Zn(2+)-binding residues include Cys-219 and Cys-222. Cys-243 (glycyl thioester intermediate) is an active-site residue. Zn(2+) contacts are provided by Cys-296 and Cys-301.

The protein belongs to the ubiquitin-activating E1 family. UBA5 subfamily.

Its function is as follows. E1-like enzyme which activates UFM1. The sequence is that of Ubiquitin-like modifier-activating enzyme 5 from Drosophila grimshawi (Hawaiian fruit fly).